The following is a 184-amino-acid chain: Large ribosomal subunit protein uL6 (184 aa).

This sequence belongs to the universal ribosomal protein uL6 family. In terms of assembly, part of the 50S ribosomal subunit.

Its function is as follows. This protein binds to the 23S rRNA, and is important in its secondary structure. It is located near the subunit interface in the base of the L7/L12 stalk, and near the tRNA binding site of the peptidyltransferase center. This Mycoplasma genitalium (strain ATCC 33530 / DSM 19775 / NCTC 10195 / G37) (Mycoplasmoides genitalium) protein is Large ribosomal subunit protein uL6.